The following is a 463-amino-acid chain: Cysteine--tRNA ligase (463 aa).

C29 provides a ligand contact to Zn(2+). The 'HIGH' region motif lies at 31–41; the sequence is PTVYDFAHIGN. 3 residues coordinate Zn(2+): C227, H252, and E256. Residues 285–289 carry the 'KMSKS' region motif; that stretch reads KMSKS. K288 serves as a coordination point for ATP.

The protein belongs to the class-I aminoacyl-tRNA synthetase family. In terms of assembly, monomer. It depends on Zn(2+) as a cofactor.

It localises to the cytoplasm. The catalysed reaction is tRNA(Cys) + L-cysteine + ATP = L-cysteinyl-tRNA(Cys) + AMP + diphosphate. This chain is Cysteine--tRNA ligase, found in Rhodopseudomonas palustris (strain ATCC BAA-98 / CGA009).